Consider the following 394-residue polypeptide: MAKEKFERSKPHVNVGTIGHVDHGKTTLTAALTTILAKKFGGAAKAYDQIDNAPEEKARGITINTSHVEYETETRHYAHVDCPGHADYVKNMITGAAQMDGAILVCSAADGPMPQTREHILLARQVGVPYIIVFMNKCDMVDDAELLELVEMEIRDLLSSYDFPGDDCPIVQGSALKALEGDAAYEEKIFELATALDSYIPTPERAVDKPFLLPIEDVFSISGRGTVVTGRVERGIIHVGDEIEIVGLKETQKTTCTGVEMFRKLLDEGQAGDNVGVLLRGTKREDVERGQVLAKPGTITPHTKFKAEVYVLSKEEGGRHTPFFANYRPQFYFRTTDVTGAVTLEKGVEMVMPGENVTITVELIAPIAMEEGLRFAIREGGRTVGAGVVSSVIA.

The tr-type G domain occupies 10 to 204 (KPHVNVGTIG…ALDSYIPTPE (195 aa)). Residues 19-26 (GHVDHGKT) are G1. Position 19 to 26 (19 to 26 (GHVDHGKT)) interacts with GTP. Thr-26 lines the Mg(2+) pocket. A G2 region spans residues 60 to 64 (GITIN). Residues 81-84 (DCPG) form a G3 region. Residues 81-85 (DCPGH) and 136-139 (NKCD) contribute to the GTP site. The tract at residues 136-139 (NKCD) is G4. Positions 174-176 (SAL) are G5.

This sequence belongs to the TRAFAC class translation factor GTPase superfamily. Classic translation factor GTPase family. EF-Tu/EF-1A subfamily. In terms of assembly, monomer.

The protein localises to the cytoplasm. The enzyme catalyses GTP + H2O = GDP + phosphate + H(+). In terms of biological role, GTP hydrolase that promotes the GTP-dependent binding of aminoacyl-tRNA to the A-site of ribosomes during protein biosynthesis. This chain is Elongation factor Tu, found in Neisseria gonorrhoeae (strain ATCC 700825 / FA 1090).